The chain runs to 289 residues: L-alanyl-D-glutamate peptidase (289 aa).

Belongs to the peptidase M15C family.

The protein localises to the secreted. In terms of biological role, cell wall lytic enzyme. Hydrolyzes the link between L-alanine and D-glutamate residues in certain bacterial cell-wall glycopeptides. The sequence is that of L-alanyl-D-glutamate peptidase (ply) from Listeria monocytogenes (Bacteriophage A500).